We begin with the raw amino-acid sequence, 145 residues long: I-leader protein (145 aa).

It belongs to the adenoviridae leader protein family.

It is found in the host cytoplasm. It localises to the host perinuclear region. The polypeptide is I-leader protein (Human adenovirus C serotype 5 (HAdV-5)).